A 70-amino-acid polypeptide reads, in one-letter code: Sec-independent protein translocase protein TatA (70 aa).

The helical transmembrane segment at M1–A21 threads the bilayer.

It belongs to the TatA/E family. In terms of assembly, the Tat system comprises two distinct complexes: a TatABC complex, containing multiple copies of TatA, TatB and TatC subunits, and a separate TatA complex, containing only TatA subunits. Substrates initially bind to the TatABC complex, which probably triggers association of the separate TatA complex to form the active translocon.

The protein resides in the cell inner membrane. Functionally, part of the twin-arginine translocation (Tat) system that transports large folded proteins containing a characteristic twin-arginine motif in their signal peptide across membranes. TatA could form the protein-conducting channel of the Tat system. The protein is Sec-independent protein translocase protein TatA of Campylobacter curvus (strain 525.92).